The chain runs to 439 residues: Tubulin beta chain (439 aa).

GTP contacts are provided by Gln11, Glu69, Ser138, Gly142, Thr143, Gly144, Asn204, and Asn226. Residue Glu69 coordinates Mg(2+).

This sequence belongs to the tubulin family. As to quaternary structure, dimer of alpha and beta chains. A typical microtubule is a hollow water-filled tube with an outer diameter of 25 nm and an inner diameter of 15 nM. Alpha-beta heterodimers associate head-to-tail to form protofilaments running lengthwise along the microtubule wall with the beta-tubulin subunit facing the microtubule plus end conferring a structural polarity. Microtubules usually have 13 protofilaments but different protofilament numbers can be found in some organisms and specialized cells. It depends on Mg(2+) as a cofactor.

Its subcellular location is the cytoplasm. The protein localises to the cytoskeleton. Its function is as follows. Tubulin is the major constituent of microtubules, a cylinder consisting of laterally associated linear protofilaments composed of alpha- and beta-tubulin heterodimers. Microtubules grow by the addition of GTP-tubulin dimers to the microtubule end, where a stabilizing cap forms. Below the cap, tubulin dimers are in GDP-bound state, owing to GTPase activity of alpha-tubulin. The chain is Tubulin beta chain (TUB2) from Encephalitozoon intestinalis (Microsporidian parasite).